We begin with the raw amino-acid sequence, 165 residues long: 2-C-methyl-D-erythritol 2,4-cyclodiphosphate synthase (165 aa).

The a divalent metal cation site is built by D12 and H14. 4-CDP-2-C-methyl-D-erythritol 2-phosphate-binding positions include 12-14 and 38-39; these read DIH and HS. An a divalent metal cation-binding site is contributed by H46. Residues 60 to 62, 136 to 139, and R146 contribute to the 4-CDP-2-C-methyl-D-erythritol 2-phosphate site; these read DIG and TTNE.

The protein belongs to the IspF family. In terms of assembly, homotrimer. A divalent metal cation serves as cofactor.

It carries out the reaction 4-CDP-2-C-methyl-D-erythritol 2-phosphate = 2-C-methyl-D-erythritol 2,4-cyclic diphosphate + CMP. It participates in isoprenoid biosynthesis; isopentenyl diphosphate biosynthesis via DXP pathway; isopentenyl diphosphate from 1-deoxy-D-xylulose 5-phosphate: step 4/6. Its function is as follows. Involved in the biosynthesis of isopentenyl diphosphate (IPP) and dimethylallyl diphosphate (DMAPP), two major building blocks of isoprenoid compounds. Catalyzes the conversion of 4-diphosphocytidyl-2-C-methyl-D-erythritol 2-phosphate (CDP-ME2P) to 2-C-methyl-D-erythritol 2,4-cyclodiphosphate (ME-CPP) with a corresponding release of cytidine 5-monophosphate (CMP). In Nostoc sp. (strain PCC 7120 / SAG 25.82 / UTEX 2576), this protein is 2-C-methyl-D-erythritol 2,4-cyclodiphosphate synthase.